We begin with the raw amino-acid sequence, 547 residues long: Sesterfisheric acid synthase (547 aa).

A helical membrane pass occupies residues 19-39 (IMGCSLGTGLLVSMIIYNYFF). N341 and N404 each carry an N-linked (GlcNAc...) asparagine glycan. C490 provides a ligand contact to heme.

The protein belongs to the cytochrome P450 family. Heme is required as a cofactor.

The protein localises to the membrane. It carries out the reaction sesterfisherol + 3 reduced [NADPH--hemoprotein reductase] + 3 O2 = sesterfisherate + 3 oxidized [NADPH--hemoprotein reductase] + 4 H2O + 4 H(+). Its pathway is secondary metabolite biosynthesis; terpenoid biosynthesis. In terms of biological role, cytochrome P450 monooxygenase; part of the gene cluster that mediates the biosynthesis of sesterfisheric acid. The bifunctional terpene synthase NfSS converts DMAPP and IPP, and also GGPP, into sesterfisherol. The C-terminal prenyltransferase (PT) domain of NfSS catalyzes formation of GFPP, whereas the N-terminal terpene cyclase (TC) domain catalyzes the cyclization of GFPP to sesterfisherol. The cytochrome P450 monooxygenase NfP450 then catalyzes oxidative modifications of sesterfisherol into sesterfisheric acid. The protein is Sesterfisheric acid synthase of Neosartorya fischeri (strain ATCC 1020 / DSM 3700 / CBS 544.65 / FGSC A1164 / JCM 1740 / NRRL 181 / WB 181) (Aspergillus fischerianus).